The following is a 343-amino-acid chain: Methylthioribose-1-phosphate isomerase (343 aa).

Substrate contacts are provided by residues 48–50 (RGA), R88, and Q193. D234 functions as the Proton donor in the catalytic mechanism. 244 to 245 (NK) is a substrate binding site.

This sequence belongs to the eIF-2B alpha/beta/delta subunits family. MtnA subfamily.

It carries out the reaction 5-(methylsulfanyl)-alpha-D-ribose 1-phosphate = 5-(methylsulfanyl)-D-ribulose 1-phosphate. Its pathway is amino-acid biosynthesis; L-methionine biosynthesis via salvage pathway; L-methionine from S-methyl-5-thio-alpha-D-ribose 1-phosphate: step 1/6. Catalyzes the interconversion of methylthioribose-1-phosphate (MTR-1-P) into methylthioribulose-1-phosphate (MTRu-1-P). The sequence is that of Methylthioribose-1-phosphate isomerase from Thermotoga maritima (strain ATCC 43589 / DSM 3109 / JCM 10099 / NBRC 100826 / MSB8).